A 416-amino-acid chain; its full sequence is 4-hydroxy-3-methylbut-2-en-1-yl diphosphate synthase (flavodoxin) (416 aa).

Cysteine 304, cysteine 307, cysteine 350, and glutamate 357 together coordinate [4Fe-4S] cluster.

It belongs to the IspG family. Requires [4Fe-4S] cluster as cofactor.

It carries out the reaction (2E)-4-hydroxy-3-methylbut-2-enyl diphosphate + oxidized [flavodoxin] + H2O + 2 H(+) = 2-C-methyl-D-erythritol 2,4-cyclic diphosphate + reduced [flavodoxin]. The protein operates within isoprenoid biosynthesis; isopentenyl diphosphate biosynthesis via DXP pathway; isopentenyl diphosphate from 1-deoxy-D-xylulose 5-phosphate: step 5/6. Its function is as follows. Converts 2C-methyl-D-erythritol 2,4-cyclodiphosphate (ME-2,4cPP) into 1-hydroxy-2-methyl-2-(E)-butenyl 4-diphosphate. This Allorhizobium ampelinum (strain ATCC BAA-846 / DSM 112012 / S4) (Agrobacterium vitis (strain S4)) protein is 4-hydroxy-3-methylbut-2-en-1-yl diphosphate synthase (flavodoxin).